The chain runs to 505 residues: Flagellin (505 aa).

The protein belongs to the bacterial flagellin family.

It localises to the secreted. The protein resides in the bacterial flagellum. Its function is as follows. Flagellin is the subunit protein which polymerizes to form the filaments of bacterial flagella. This Salmonella rostock protein is Flagellin (fliC).